Reading from the N-terminus, the 324-residue chain is Elongation factor Ts, mitochondrial (324 aa).

A mitochondrion-targeting transit peptide spans 1–44 (MSLLRSLRFFPVACTGRSARAVLLQPSQPWHTLHAGPSLSSSAS). Lys-75 and Lys-132 each carry N6-succinyllysine. Ser-269 carries the post-translational modification Phosphoserine.

The protein belongs to the EF-Ts family.

The protein localises to the mitochondrion. In terms of biological role, associates with the EF-Tu.GDP complex and induces the exchange of GDP to GTP. It remains bound to the aminoacyl-tRNA.EF-Tu.GTP complex up to the GTP hydrolysis stage on the ribosome. The protein is Elongation factor Ts, mitochondrial (Tsfm) of Rattus norvegicus (Rat).